We begin with the raw amino-acid sequence, 486 residues long: L-arabinose isomerase (486 aa).

Mn(2+)-binding residues include Glu-299, Glu-324, His-341, and His-440.

Belongs to the arabinose isomerase family. Mn(2+) is required as a cofactor.

The catalysed reaction is beta-L-arabinopyranose = L-ribulose. It participates in carbohydrate degradation; L-arabinose degradation via L-ribulose; D-xylulose 5-phosphate from L-arabinose (bacterial route): step 1/3. Functionally, catalyzes the conversion of L-arabinose to L-ribulose. The polypeptide is L-arabinose isomerase (Shouchella clausii (strain KSM-K16) (Alkalihalobacillus clausii)).